Reading from the N-terminus, the 82-residue chain is MYLQMNFFPCPSPSFHLGESVMVVVVDRGTGRCTHRHGRRCITVIQSAGNPVHATDYEAYWLRERLMGMRIGRLVILYTSGK.

This is an uncharacterized protein from Ictaluridae (bullhead catfishes).